Reading from the N-terminus, the 335-residue chain is 3-ketodihydrosphingosine reductase TSC10 (335 aa).

Gly42, Ser44, Ser45, Gly46, Arg67, Asp68, Lys71, Asp95, and Leu96 together coordinate NADPH. Residues 42–46 carry the GXSXG motif; sequence GGSSG. The involved in homodimer formation stretch occupies residues 141 to 207; it reads LKDGLDGVYW…RGLSDALRSE (67 aa). Tyr190 serves as the catalytic Proton acceptor. 3 residues coordinate NADP(+): Tyr190, Lys194, and Ile223. The active-site Lowers pKa of active site Tyr is the Lys194. A helical transmembrane segment spans residues 288 to 308; the sequence is TNNFLLDTLWLIVSSVGVPIW.

This sequence belongs to the short-chain dehydrogenases/reductases (SDR) family. Homodimer; a minor portion forms homotetramers.

It localises to the endoplasmic reticulum membrane. It catalyses the reaction sphinganine + NADP(+) = 3-oxosphinganine + NADPH + H(+). The protein operates within lipid metabolism; sphingolipid metabolism. Its function is as follows. Catalyzes the reduction of 3'-oxosphinganine (3-ketodihydrosphingosine/KDS) to sphinganine (dihydrosphingosine/DHS), the second step of de novo sphingolipid biosynthesis. This is 3-ketodihydrosphingosine reductase TSC10 (TSC10) from Cryptococcus neoformans var. neoformans serotype D (strain JEC21 / ATCC MYA-565) (Filobasidiella neoformans).